A 195-amino-acid chain; its full sequence is 3-hydroxyanthranilate 3,4-dioxygenase (195 aa).

R50 serves as a coordination point for O2. 3 residues coordinate Fe cation: H54, E60, and H102. E60 contacts substrate. Residues R106 and E116 each coordinate substrate. 4 residues coordinate a divalent metal cation: C131, C136, C170, and C173.

Belongs to the 3-HAO family. Fe(2+) is required as a cofactor.

The protein resides in the cytoplasm. It catalyses the reaction 3-hydroxyanthranilate + O2 = (2Z,4Z)-2-amino-3-carboxymuconate 6-semialdehyde. The protein operates within cofactor biosynthesis; NAD(+) biosynthesis; quinolinate from L-kynurenine: step 3/3. In terms of biological role, catalyzes the oxidative ring opening of 3-hydroxyanthranilate to 2-amino-3-carboxymuconate semialdehyde, which spontaneously cyclizes to quinolinate. In Aspergillus terreus (strain NIH 2624 / FGSC A1156), this protein is 3-hydroxyanthranilate 3,4-dioxygenase (bna1).